A 307-amino-acid chain; its full sequence is MAIEKKFVNDGYVKASMDEYFAEQLNRAGYGGMELNRTPMGTQIIIYSEKPGMVIGKAGKVIRKLTRDVATKYNLENPQIDAQEVKKPELNAQMMASRLAASIERGWYFRKAGHNTIRAVMNAGALGCEVVISGKLTGARSRVEKFVDGYIKHSGHPVEEVVDEGFAVAIKKLGTLGCKVRIIQPGVVLPDSYKVRESVEIEEPAEKPAEKQVEKPAVAPKKEAAKAKAPAPAAAPEPAPTEEPEVAEPEEAEEAQVEASEDFEEAELIYVEGSEEVRRQVNGVWQHKHESYDYWHPMARVHKEAKE.

Residues 17 to 86 (MDEYFAEQLN…NPQIDAQEVK (70 aa)) enclose the KH type-2 domain. Positions 201-226 (IEEPAEKPAEKQVEKPAVAPKKEAAK) are enriched in basic and acidic residues. Residues 201 to 265 (IEEPAEKPAE…QVEASEDFEE (65 aa)) are disordered. Residues 240-265 (PTEEPEVAEPEEAEEAQVEASEDFEE) show a composition bias toward acidic residues.

The protein belongs to the universal ribosomal protein uS3 family. In terms of assembly, part of the 30S ribosomal subunit.

Its function is as follows. Binds the lower part of the 30S subunit head. The chain is Small ribosomal subunit protein uS3 from Methanosarcina mazei (strain ATCC BAA-159 / DSM 3647 / Goe1 / Go1 / JCM 11833 / OCM 88) (Methanosarcina frisia).